Consider the following 928-residue polypeptide: MDSHTSTEGVPLSETNNRSHATPSAQYCQMTVEETCSKLQTNPETGLTSSQEAMHRRDIHGSNEFAQEEEDSLIKKFFEQFSENPLLLLLIGAAAVSFFMGNHDDAISITLAILIVTTVGFVQEYRSEKSLEALNKLVPPEAHLIRAGNSQTVLASTLVPGDLVEFSVGDRIPADCRIVKAVHLSIDESNLTGETTPVTKDTNPVTGTPPIGLADRTNTAYMGTLVRDGNGTGIVVGTGSHTAFGAVYDMVSEISTPKTPLQASMDNLGKDLSLVSFGVIGVICLIGMFQGRDWLEMFTIGVSLAVAAIPEGLPIIVTVTLALGVLRMSRQKAIVRKLPSVETLGSVNVICSDKTGTLTRNHMSCTTCWTVDMGDLANAVTLKPGQSHTEADPKAVAALKNSVSLANMLKVGNLCNNSKFNREAGHLVGNATDIALIEVLDYFGLEDTRETRKRVAEVPFSSSRKWMLTSTTTGDSSTPMISVKGAGEVIAPFCEYYCKKDGKTAPFNDDMRKKVTEIASEMSNDGLRIIAFAYKQGKYEEGSEEAPEGLVFAGLMGLYDPPRPDVPRAIRRLTTGGVRVVMITGDSAATALSIGRRIGMPLMPGTQSVVEGSKLATMSDQALDECLQTASIFARTSPEDKMKIVKGFQRRGDVVAMTGDGVNDAPALKLADIGIAMGQGGTDVAKEAADMILTDDDFATILSAIEEGKGIFNNIRNFITFQLSTSMAALSIVAVATIMGLENPLNPMQILWINILMDGPPAQSLGVEPVDPDVMNKPPRPRNEKVMTPDLVKKCVEAAVIILVGTMLVYVTQMQDGVIDKRDTTMTFTCFVFYDMFNALACRSATKSVFEIGFFSNKMFLYACGASIIGQLAVVYVPFLQSVFQTEALSVKDLLSLVLISSSVWILDEAKKYFLKSRSTNNYTNSVV.

A disordered region spans residues 1 to 25 (MDSHTSTEGVPLSETNNRSHATPSA). Transmembrane regions (helical) follow at residues 81-101 (FSEN…FFMG), 105-125 (DAIS…VQEY), 271-291 (DLSL…MFQG), and 306-326 (VAAI…LGVL). Aspartate 353 acts as the 4-aspartylphosphate intermediate in catalysis. A run of 5 helical transmembrane segments spans residues 718 to 738 (FITF…VATI), 750 to 770 (ILWI…VEPV), 799 to 819 (AVII…DGVI), 860 to 880 (FLYA…VPFL), and 887 to 907 (EALS…VWIL).

This sequence belongs to the cation transport ATPase (P-type) (TC 3.A.3) family.

The protein localises to the golgi apparatus membrane. The enzyme catalyses Ca(2+)(in) + ATP + H2O = Ca(2+)(out) + ADP + phosphate + H(+). Functionally, this magnesium-dependent enzyme catalyzes the hydrolysis of ATP coupled with the transport of calcium. Has a role in the secretory pathway. This chain is Calcium-transporting ATPase 1 (PMR1), found in Yarrowia lipolytica (strain CLIB 122 / E 150) (Yeast).